Reading from the N-terminus, the 253-residue chain is tRNA pseudouridine synthase A (253 aa).

The active-site Nucleophile is the Asp53. Residue Tyr111 participates in substrate binding.

This sequence belongs to the tRNA pseudouridine synthase TruA family. As to quaternary structure, homodimer.

The catalysed reaction is uridine(38/39/40) in tRNA = pseudouridine(38/39/40) in tRNA. In terms of biological role, formation of pseudouridine at positions 38, 39 and 40 in the anticodon stem and loop of transfer RNAs. This is tRNA pseudouridine synthase A from Chlorobium luteolum (strain DSM 273 / BCRC 81028 / 2530) (Pelodictyon luteolum).